Here is a 211-residue protein sequence, read N- to C-terminus: Urease accessory protein UreF (211 aa).

The tract at residues 68 to 93 is disordered; the sequence is LAPDGADRETDARTPSPAARDASRSQ.

The protein belongs to the UreF family. UreD, UreF and UreG form a complex that acts as a GTP-hydrolysis-dependent molecular chaperone, activating the urease apoprotein by helping to assemble the nickel containing metallocenter of UreC. The UreE protein probably delivers the nickel.

It is found in the cytoplasm. Required for maturation of urease via the functional incorporation of the urease nickel metallocenter. The polypeptide is Urease accessory protein UreF (Mycobacterium marinum (strain ATCC BAA-535 / M)).